The chain runs to 619 residues: HAUS augmin-like complex subunit 5 (619 aa).

Position 1 is an N-acetylmethionine (Met-1). 3 coiled-coil regions span residues 73–108, 310–395, and 550–590; these read KIHRKLELEATVARLRAENQELDQSLELMDQESEAQ, ALLS…LVED, and ELLQ…LQGI.

It belongs to the HAUS5 family. Component of the HAUS augmin-like complex. The complex interacts with the gamma-tubulin ring complex and this interaction is required for spindle assembly. Interacts with EML3 (phosphorylated at 'Thr-882').

It is found in the cytoplasm. Its subcellular location is the cytoskeleton. The protein resides in the microtubule organizing center. The protein localises to the centrosome. It localises to the spindle. Contributes to mitotic spindle assembly, maintenance of centrosome integrity and completion of cytokinesis as part of the HAUS augmin-like complex. In Mus musculus (Mouse), this protein is HAUS augmin-like complex subunit 5 (Haus5).